Here is a 311-residue protein sequence, read N- to C-terminus: Transcription initiation factor IIB (311 aa).

The segment at 11–42 (KETKCPECGSTKLINDHERGEVVCGACGLVID) adopts a TFIIB-type zinc-finger fold. Cysteine 15, cysteine 18, cysteine 34, and cysteine 37 together coordinate Zn(2+). 2 repeat units span residues 128–211 (SELD…TREL) and 222–303 (DYVP…ELTE).

It belongs to the TFIIB family.

In terms of biological role, stabilizes TBP binding to an archaeal box-A promoter. Also responsible for recruiting RNA polymerase II to the pre-initiation complex (DNA-TBP-TFIIB). This Methanosphaera stadtmanae (strain ATCC 43021 / DSM 3091 / JCM 11832 / MCB-3) protein is Transcription initiation factor IIB.